Reading from the N-terminus, the 37-residue chain is Potassium channel toxin alpha-KTx 1.11 (37 aa).

Intrachain disulfides connect Cys7-Cys28, Cys13-Cys33, and Cys17-Cys35.

This sequence belongs to the short scorpion toxin superfamily. Potassium channel inhibitor family. Alpha-KTx 01 subfamily. Expressed by the venom gland.

Its subcellular location is the secreted. In terms of biological role, reversibly blocks the high conductance calcium-activated potassium channels composed of only alpha subunits (KCa1.1/KCNMA1). Unreversibly blocks the high conductance calcium-activated potassium channels composed of alpha and beta1 subunits (KCNMA1 and KCNMB1). Unreversibly and weakly blocks the high conductance calcium-activated potassium channels composed of alpha and beta4 (KCNMA1 and KCNMB4). This is Potassium channel toxin alpha-KTx 1.11 from Centruroides noxius (Mexican scorpion).